Reading from the N-terminus, the 303-residue chain is UDP-3-O-acyl-N-acetylglucosamine deacetylase (303 aa).

Positions 78, 237, and 241 each coordinate Zn(2+). The active-site Proton donor is His-264.

The protein belongs to the LpxC family. Zn(2+) is required as a cofactor.

The enzyme catalyses a UDP-3-O-[(3R)-3-hydroxyacyl]-N-acetyl-alpha-D-glucosamine + H2O = a UDP-3-O-[(3R)-3-hydroxyacyl]-alpha-D-glucosamine + acetate. It participates in glycolipid biosynthesis; lipid IV(A) biosynthesis; lipid IV(A) from (3R)-3-hydroxytetradecanoyl-[acyl-carrier-protein] and UDP-N-acetyl-alpha-D-glucosamine: step 2/6. Catalyzes the hydrolysis of UDP-3-O-myristoyl-N-acetylglucosamine to form UDP-3-O-myristoylglucosamine and acetate, the committed step in lipid A biosynthesis. This Xanthomonas axonopodis pv. citri (strain 306) protein is UDP-3-O-acyl-N-acetylglucosamine deacetylase.